A 569-amino-acid chain; its full sequence is Proline--tRNA ligase (569 aa).

This sequence belongs to the class-II aminoacyl-tRNA synthetase family. ProS type 1 subfamily. Homodimer.

It is found in the cytoplasm. The catalysed reaction is tRNA(Pro) + L-proline + ATP = L-prolyl-tRNA(Pro) + AMP + diphosphate. Catalyzes the attachment of proline to tRNA(Pro) in a two-step reaction: proline is first activated by ATP to form Pro-AMP and then transferred to the acceptor end of tRNA(Pro). As ProRS can inadvertently accommodate and process non-cognate amino acids such as alanine and cysteine, to avoid such errors it has two additional distinct editing activities against alanine. One activity is designated as 'pretransfer' editing and involves the tRNA(Pro)-independent hydrolysis of activated Ala-AMP. The other activity is designated 'posttransfer' editing and involves deacylation of mischarged Ala-tRNA(Pro). The misacylated Cys-tRNA(Pro) is not edited by ProRS. The protein is Proline--tRNA ligase of Dehalococcoides mccartyi (strain ATCC BAA-2266 / KCTC 15142 / 195) (Dehalococcoides ethenogenes (strain 195)).